The following is a 1284-amino-acid chain: Neuronal cell adhesion molecule (1284 aa).

An N-terminal signal peptide occupies residues 1–24 (MMKEKSISASKASLVFFLCQMISA). The Extracellular portion of the chain corresponds to 25 to 1143 (LDVPLDSKLL…ASRQVDIATQ (1119 aa)). Ig-like C2-type domains lie at 41 to 129 (PTIT…AAIS), 136 to 230 (PSRS…QPIS), 243 to 332 (PPVL…ISVT), 337 to 424 (PYWI…AFVN), 430 to 517 (PRIL…VQLE), and 521 to 608 (PTMI…AVLT). Intrachain disulfides connect cysteine 63-cysteine 118 and cysteine 162-cysteine 213. The N-linked (GlcNAc...) asparagine glycan is linked to asparagine 78. N-linked (GlcNAc...) asparagine glycans are attached at residues asparagine 218 and asparagine 290. 2 cysteine pairs are disulfide-bonded: cysteine 268–cysteine 316 and cysteine 358–cysteine 408. Residues asparagine 409, asparagine 483, asparagine 576, asparagine 581, asparagine 595, and asparagine 692 are each glycosylated (N-linked (GlcNAc...) asparagine). Cystine bridges form between cysteine 452-cysteine 501 and cysteine 543-cysteine 592. Fibronectin type-III domains follow at residues 625 to 720 (PPLD…TKSA), 725 to 819 (NPSN…SGED), 824 to 926 (APGN…TPEG), 930 to 1026 (PPSF…IMDE), and 1040 to 1132 (QPLY…TGPA). Polar residues predominate over residues 707-731 (QPSEPSEQYLTKSANPDENPSNVQG). Residues 707–732 (QPSEPSEQYLTKSANPDENPSNVQGI) form a disordered region. Asparagine 778, asparagine 834, asparagine 885, asparagine 969, asparagine 985, asparagine 995, asparagine 1048, asparagine 1059, and asparagine 1091 each carry an N-linked (GlcNAc...) asparagine glycan. Residues 1144 to 1166 (GWFIGLMCAVALLILILLIVCFI) form a helical membrane-spanning segment. Residues 1167–1284 (RRNKGGKYPV…SPVNAMNSFV (118 aa)) are Cytoplasmic-facing. Composition is skewed to basic and acidic residues over residues 1175-1195 (PVKEKEDAHADPEIQPMKEDD), 1202-1212 (RSLESDAEDHK), and 1221-1230 (PSDRTVKKED). A disordered region spans residues 1175–1284 (PVKEKEDAHA…SPVNAMNSFV (110 aa)). Over residues 1268–1284 (NESSEAPSPVNAMNSFV) the composition is skewed to polar residues.

Belongs to the immunoglobulin superfamily. L1/neurofascin/NgCAM family. In terms of assembly, heterodimer of an alpha and a beta chain. As to expression, retina and developing brain.

It localises to the cell membrane. Functionally, this protein is a cell adhesion molecule involved in neuron-neuron adhesion, neurite fasciculation, outgrowth of neurites, etc. Specifically involved in the development of optic fibres in the retina. This Gallus gallus (Chicken) protein is Neuronal cell adhesion molecule.